The sequence spans 232 residues: 2-C-methyl-D-erythritol 4-phosphate cytidylyltransferase (232 aa).

This sequence belongs to the IspD/TarI cytidylyltransferase family. IspD subfamily.

It catalyses the reaction 2-C-methyl-D-erythritol 4-phosphate + CTP + H(+) = 4-CDP-2-C-methyl-D-erythritol + diphosphate. The protein operates within isoprenoid biosynthesis; isopentenyl diphosphate biosynthesis via DXP pathway; isopentenyl diphosphate from 1-deoxy-D-xylulose 5-phosphate: step 2/6. In terms of biological role, catalyzes the formation of 4-diphosphocytidyl-2-C-methyl-D-erythritol from CTP and 2-C-methyl-D-erythritol 4-phosphate (MEP). This chain is 2-C-methyl-D-erythritol 4-phosphate cytidylyltransferase, found in Nitrosospira multiformis (strain ATCC 25196 / NCIMB 11849 / C 71).